The chain runs to 350 residues: Methylthioribose-1-phosphate isomerase (350 aa).

Substrate contacts are provided by residues 48 to 50 (RGA), Arg93, and Gln198. Asp239 (proton donor) is an active-site residue. Position 249–250 (249–250 (NK)) interacts with substrate.

It belongs to the eIF-2B alpha/beta/delta subunits family. MtnA subfamily.

It catalyses the reaction 5-(methylsulfanyl)-alpha-D-ribose 1-phosphate = 5-(methylsulfanyl)-D-ribulose 1-phosphate. It functions in the pathway amino-acid biosynthesis; L-methionine biosynthesis via salvage pathway; L-methionine from S-methyl-5-thio-alpha-D-ribose 1-phosphate: step 1/6. In terms of biological role, catalyzes the interconversion of methylthioribose-1-phosphate (MTR-1-P) into methylthioribulose-1-phosphate (MTRu-1-P). The sequence is that of Methylthioribose-1-phosphate isomerase from Fervidobacterium nodosum (strain ATCC 35602 / DSM 5306 / Rt17-B1).